Reading from the N-terminus, the 613-residue chain is Autophagy-related protein 22-2 (613 aa).

The disordered stretch occupies residues 1–30 (MAFNSTPPVSPGGEAQQRPPRFPGEDTTPT). A helical transmembrane segment spans residues 41–61 (YGIAAEVFAVCGVGSFLPLTL). An N-linked (GlcNAc...) asparagine glycan is attached at N90. Transmembrane regions (helical) follow at residues 120-140 (SFAM…LISF), 167-187 (LFIF…VVGV), 189-209 (CLGS…ANDP), 278-298 (VGLG…MLFA), 307-327 (ISGT…WFSF), 382-402 (VIIF…VSGT), and 418-438 (VGLL…LWPV). The N-linked (GlcNAc...) asparagine glycan is linked to N448. 4 helical membrane-spanning segments follow: residues 453 to 473 (LCIA…IPLF), 477 to 497 (GVVG…HGLV), 508 to 528 (FFGL…YAAT), and 553 to 573 (GFFF…MVNA). A disordered region spans residues 592–613 (REHASEYGGPSEEAEGLLARDI).

Belongs to the ATG22 family.

It is found in the vacuole membrane. Vacuolar effluxer which mediate the efflux of amino acids resulting from autophagic degradation. The release of autophagic amino acids allows the maintenance of protein synthesis and viability during nitrogen starvation. In Aspergillus fumigatus (strain ATCC MYA-4609 / CBS 101355 / FGSC A1100 / Af293) (Neosartorya fumigata), this protein is Autophagy-related protein 22-2 (atg22-2).